The sequence spans 202 residues: LexA repressor (202 aa).

Positions Arg28–Lys48 form a DNA-binding region, H-T-H motif. Active-site for autocatalytic cleavage activity residues include Ser119 and Lys156.

Belongs to the peptidase S24 family. Homodimer.

The catalysed reaction is Hydrolysis of Ala-|-Gly bond in repressor LexA.. Represses a number of genes involved in the response to DNA damage (SOS response), including recA and lexA. Binds to the 16 bp palindromic sequence 5'-CTGTATATATATACAG-3'. In the presence of single-stranded DNA, RecA interacts with LexA causing an autocatalytic cleavage which disrupts the DNA-binding part of LexA, leading to derepression of the SOS regulon and eventually DNA repair. The polypeptide is LexA repressor (Cronobacter sakazakii (strain ATCC BAA-894) (Enterobacter sakazakii)).